Here is a 524-residue protein sequence, read N- to C-terminus: Chromosomal replication initiator protein DnaA (524 aa).

The domain I, interacts with DnaA modulators stretch occupies residues 1 to 85; it reads MSQNSSSLLE…TRVLSLRMGR (85 aa). The interval 85 to 182 is domain II; that stretch reads RSFSLAVSVE…TPAHNPNREV (98 aa). A disordered region spans residues 95-183; sequence PEQEIPETPA…PAHNPNREVS (89 aa). The span at 148-158 shows a compositional bias: pro residues; sequence APEPHPAPIAD. A domain III, AAA+ region region spans residues 183–399; it reads SLNPKYTFES…GALIRVSAYS (217 aa). Residues Gly227, Gly229, Lys230, and Thr231 each coordinate ATP. The interval 400 to 524 is domain IV, binds dsDNA; that stretch reads SLINQPIDKE…TQLIKSRGRN (125 aa).

It belongs to the DnaA family. Oligomerizes as a right-handed, spiral filament on DNA at oriC.

It is found in the cytoplasm. Functionally, plays an essential role in the initiation and regulation of chromosomal replication. ATP-DnaA binds to the origin of replication (oriC) to initiate formation of the DNA replication initiation complex once per cell cycle. Binds the DnaA box (a 9 base pair repeat at the origin) and separates the double-stranded (ds)DNA. Forms a right-handed helical filament on oriC DNA; dsDNA binds to the exterior of the filament while single-stranded (ss)DNA is stabiized in the filament's interior. The ATP-DnaA-oriC complex binds and stabilizes one strand of the AT-rich DNA unwinding element (DUE), permitting loading of DNA polymerase. After initiation quickly degrades to an ADP-DnaA complex that is not apt for DNA replication. Binds acidic phospholipids. The chain is Chromosomal replication initiator protein DnaA from Corynebacterium glutamicum (strain ATCC 13032 / DSM 20300 / JCM 1318 / BCRC 11384 / CCUG 27702 / LMG 3730 / NBRC 12168 / NCIMB 10025 / NRRL B-2784 / 534).